The following is a 292-amino-acid chain: 4-hydroxy-tetrahydrodipicolinate synthase (292 aa).

Threonine 45 is a binding site for pyruvate. Tyrosine 133 functions as the Proton donor/acceptor in the catalytic mechanism. Lysine 161 serves as the catalytic Schiff-base intermediate with substrate. Isoleucine 203 provides a ligand contact to pyruvate.

It belongs to the DapA family. In terms of assembly, homotetramer; dimer of dimers.

The protein localises to the cytoplasm. The enzyme catalyses L-aspartate 4-semialdehyde + pyruvate = (2S,4S)-4-hydroxy-2,3,4,5-tetrahydrodipicolinate + H2O + H(+). The protein operates within amino-acid biosynthesis; L-lysine biosynthesis via DAP pathway; (S)-tetrahydrodipicolinate from L-aspartate: step 3/4. In terms of biological role, catalyzes the condensation of (S)-aspartate-beta-semialdehyde [(S)-ASA] and pyruvate to 4-hydroxy-tetrahydrodipicolinate (HTPA). This is 4-hydroxy-tetrahydrodipicolinate synthase from Azoarcus sp. (strain BH72).